The primary structure comprises 416 residues: Multifunctional CCA protein (416 aa).

ATP contacts are provided by Gly8 and Arg11. Residues Gly8 and Arg11 each coordinate CTP. 2 residues coordinate Mg(2+): Asp21 and Asp23. Positions 91, 137, and 140 each coordinate ATP. Positions 91, 137, and 140 each coordinate CTP. Residues 226 to 327 (TGVHIMLVID…VNLLERCDAF (102 aa)) form the HD domain.

This sequence belongs to the tRNA nucleotidyltransferase/poly(A) polymerase family. Bacterial CCA-adding enzyme type 1 subfamily. In terms of assembly, monomer. Can also form homodimers and oligomers. Mg(2+) is required as a cofactor. Ni(2+) serves as cofactor.

It carries out the reaction a tRNA precursor + 2 CTP + ATP = a tRNA with a 3' CCA end + 3 diphosphate. The catalysed reaction is a tRNA with a 3' CCA end + 2 CTP + ATP = a tRNA with a 3' CCACCA end + 3 diphosphate. In terms of biological role, catalyzes the addition and repair of the essential 3'-terminal CCA sequence in tRNAs without using a nucleic acid template. Adds these three nucleotides in the order of C, C, and A to the tRNA nucleotide-73, using CTP and ATP as substrates and producing inorganic pyrophosphate. tRNA 3'-terminal CCA addition is required both for tRNA processing and repair. Also involved in tRNA surveillance by mediating tandem CCA addition to generate a CCACCA at the 3' terminus of unstable tRNAs. While stable tRNAs receive only 3'-terminal CCA, unstable tRNAs are marked with CCACCA and rapidly degraded. The polypeptide is Multifunctional CCA protein (Janthinobacterium sp. (strain Marseille) (Minibacterium massiliensis)).